The following is a 350-amino-acid chain: Aldo-keto reductase 1B (350 aa).

Residue Tyr-84 is the Proton donor of the active site. His-146 provides a ligand contact to substrate. 244-306 (SPLGSPNRPW…SVTKDRIESN (63 aa)) is an NADP(+) binding site.

Belongs to the aldo/keto reductase family.

The protein localises to the cytoplasm. The enzyme catalyses an alditol + NADP(+) = an aldose + NADPH + H(+). It carries out the reaction all-trans-retinol + NADP(+) = all-trans-retinal + NADPH + H(+). The catalysed reaction is 9-cis-retinol + NADP(+) = 9-cis-retinal + NADPH + H(+). It catalyses the reaction 13-cis-retinol + NADP(+) = 13-cis-retinal + NADPH + H(+). The enzyme catalyses glycerol + NADP(+) = D-glyceraldehyde + NADPH + H(+). It carries out the reaction glycerol + NADP(+) = L-glyceraldehyde + NADPH + H(+). The catalysed reaction is prenol + NADP(+) = 3-methyl-2-butenal + NADPH + H(+). It catalyses the reaction (E)-hex-2-en-1-ol + NADP(+) = (E)-hex-2-enal + NADPH + H(+). The enzyme catalyses (E,E)-2,4-hexadien-1-ol + NADP(+) = (E,E)-2,4-hexadienal + NADPH + H(+). It carries out the reaction a 4-hydroxynonen-1-ol + NADP(+) = a 4-hydroxynonenal + NADPH + H(+). The catalysed reaction is prostaglandin F2alpha + NADP(+) = prostaglandin H2 + NADPH + H(+). It catalyses the reaction allyl alcohol + NADP(+) = acrolein + NADPH + H(+). The enzyme catalyses pyridine 3-methanol + NADP(+) = pyridine-3-carbaldehyde + NADPH + H(+). It carries out the reaction 1-hexadecanoyl-2-(5-oxopentanoyl)-sn-glycero-3-phosphocholine + NADPH + H(+) = 1-hexadecanoyl-2-(5-hydroxypentanoyl)-sn-glycero-3-phosphocholine + NADP(+). The catalysed reaction is 1-hexadecanoyl-2-(7-oxoheptanoyl)-sn-glycero-3-phosphocholine + NADPH + H(+) = 1-hexadecanoyl-2-(7-hydroxyheptanoyl)-sn-glycero-3-phosphocholine + NADP(+). It catalyses the reaction 1-hexadecanoyl-2-(9-oxononanoyl)-sn-glycero-3-phosphocholine + NADPH + H(+) = 1-hexadecanoyl-2-(9-hydroxynonanoyl)-sn-glycero-3-phosphocholine + NADP(+). The enzyme catalyses 1-hexadecanoyl-2-(5-oxopentanoyl)-sn-glycero-3-phosphoethanolamine + NADPH + H(+) = 1-hexadecanoyl-2-(5-hydroxypentanoyl)-sn-glycero-3-phosphoethanolamine + NADP(+). Functionally, catalyzes the NADPH-dependent reduction of a wide variety of carbonyl-containing compounds to their corresponding alcohols. Displays enzymatic activity towards endogenous metabolites such as aromatic and aliphatic aldehydes, ketones, monosaccharides, bile acids and xenobiotics substrates. Key enzyme in the polyol pathway, catalyzes reduction of glucose to sorbitol during hyperglycemia. Reduces steroids and their derivatives and prostaglandins. Through production of prostaglandin F2alpha may regulate the activity of non-muscle myosin II in an autocrine or paracrine fashion; influences border cell and nurse cell stiffness to facilitate border cell cluster migration. Also regulates the cell surface localization of integrins in an autocrine or paracrine fashion; influences border cell adhesion to maintain border cell cluster morphology. In hemocytes, probably contributes to production of sugar alcohols in the hemolymph, which act as alarmins involved in gut-fat body innate immunological communication (GFIC); leads to activation of the imd/Relish signaling pathway in the fat body. This chain is Aldo-keto reductase 1B, found in Drosophila melanogaster (Fruit fly).